The sequence spans 291 residues: MELLCCEVDPMRRALPDPNLLYDDRVLHNLLTIEERYLPQCSYFKCVQKDIQPFMRRMVATWMLEVCEEQKCEEEVFPLAMNYLDRFLAVVPTRKCHLQLLGAVCMFLASKLKETIPLTAEKLCIYTDNSIKPQELLEWELVVLGKLKWNLAAVTPHDFIEHILRKLPLPKDKLVLIRKHAQTFIALCATDFNFAMYPPSMIATGSVGAAICGLQLDDGDRSLSGDSLTDFLAKITSTDVDCLKACQEQIESVLVSNLRQVRQQQQQSNPSKTIEELDQASTPTDVRDINL.

The tract at residues 264–291 (QQQQSNPSKTIEELDQASTPTDVRDINL) is disordered. The residue at position 282 (Thr-282) is a Phosphothreonine.

It belongs to the cyclin family. Cyclin D subfamily. As to quaternary structure, interacts with the CDK4 and CDK6 protein kinases to form a serine/threonine kinase holoenzyme complex. The cyclin subunit imparts substrate specificity to the complex. Phosphorylation at Thr-282 by MAP kinases is required for ubiquitination and degradation by the DCX(AMBRA1) complex. Post-translationally, ubiquitinated by the DCX(AMBRA1) complex during the transition from G1 to S cell phase, leading to its degradation: ubiquitination is dependent on Thr-282 phosphorylation. The DCX(AMBRA1) complex represents the major regulator of CCND2 stability during the G1/S transition.

The protein resides in the nucleus. The protein localises to the cytoplasm. It localises to the nucleus membrane. Regulatory component of the cyclin D2-CDK4 (DC) complex that phosphorylates and inhibits members of the retinoblastoma (RB) protein family including RB1 and regulates the cell-cycle during G(1)/S transition. Phosphorylation of RB1 allows dissociation of the transcription factor E2F from the RB/E2F complex and the subsequent transcription of E2F target genes which are responsible for the progression through the G(1) phase. Hypophosphorylates RB1 in early G(1) phase. Cyclin D-CDK4 complexes are major integrators of various mitogenenic and antimitogenic signals. The sequence is that of G1/S-specific cyclin-D2 (CCND2) from Gallus gallus (Chicken).